Consider the following 319-residue polypeptide: tRNA-cytidine(32) 2-sulfurtransferase (319 aa).

A PP-loop motif motif is present at residues 49 to 54 (SGGKDS). 3 residues coordinate [4Fe-4S] cluster: C124, C127, and C215. The segment at 276–319 (DGDTAFDKEEFRDPAPDADDVEDAPKKRTISILDSRGKESGCGA) is disordered. Basic and acidic residues-rich tracts occupy residues 280-290 (AFDKEEFRDPA) and 310-319 (SRGKESGCGA).

The protein belongs to the TtcA family. In terms of assembly, homodimer. Mg(2+) serves as cofactor. Requires [4Fe-4S] cluster as cofactor.

The protein localises to the cytoplasm. The catalysed reaction is cytidine(32) in tRNA + S-sulfanyl-L-cysteinyl-[cysteine desulfurase] + AH2 + ATP = 2-thiocytidine(32) in tRNA + L-cysteinyl-[cysteine desulfurase] + A + AMP + diphosphate + H(+). Its pathway is tRNA modification. Catalyzes the ATP-dependent 2-thiolation of cytidine in position 32 of tRNA, to form 2-thiocytidine (s(2)C32). The sulfur atoms are provided by the cysteine/cysteine desulfurase (IscS) system. The protein is tRNA-cytidine(32) 2-sulfurtransferase of Chromobacterium violaceum (strain ATCC 12472 / DSM 30191 / JCM 1249 / CCUG 213 / NBRC 12614 / NCIMB 9131 / NCTC 9757 / MK).